We begin with the raw amino-acid sequence, 109 residues long: Spermidine export protein MdtI (109 aa).

The next 4 helical transmembrane spans lie at 6–26 (WVHA…NVFL), 36–56 (IFGL…SQAV), 64–84 (AYAL…WILF), and 88–108 (LNRK…MVKL).

The protein belongs to the drug/metabolite transporter (DMT) superfamily. Small multidrug resistance (SMR) (TC 2.A.7.1) family. MdtI subfamily. Forms a complex with MdtJ.

The protein resides in the cell inner membrane. Catalyzes the excretion of spermidine. In Shigella dysenteriae serotype 1 (strain Sd197), this protein is Spermidine export protein MdtI.